We begin with the raw amino-acid sequence, 201 residues long: Glycine-rich protein 23 (201 aa).

Positions 1-24 (MGLISGKVCVFIFVFALVAEFSFG) are cleaved as a signal peptide. Repeat copies occupy residues 62–67 (GLGGGG), 68–73 (GLGGGG), 74–79 (GLGGGG), 80–85 (GLGGGG), 86–91 (GLGGGG), 92–97 (GLGGGG), 98–103 (GLGGGS), 104–109 (GLGGGG), 110–115 (GLGGGS), 116–121 (GLGGGG), 122–129 (GLGGGGGG), 130–135 (GLGGGG), 136–143 (GLGGGAGG), 144–151 (GYGGGAGG), 152–157 (GLGGGG), 158–163 (GIGGGG), 164–169 (GFGGGG), 170–175 (GGGFGG), 176–182 (GAGGGFG), 184–189 (GIGGGG), and 190–194 (GLGGG). The 21 X 6 AA approximate tandem repeats of G-L-G-G-G-G, Gly-rich stretch occupies residues 62–194 (GLGGGGGLGG…IGGGGGLGGG (133 aa)).

The polypeptide is Glycine-rich protein 23 (Arabidopsis thaliana (Mouse-ear cress)).